We begin with the raw amino-acid sequence, 313 residues long: Ribosomal RNA small subunit methyltransferase H (313 aa).

Residues 35–37, Asp55, Phe79, Asp100, and Gln107 each bind S-adenosyl-L-methionine; that span reads GGH.

Belongs to the methyltransferase superfamily. RsmH family.

Its subcellular location is the cytoplasm. The enzyme catalyses cytidine(1402) in 16S rRNA + S-adenosyl-L-methionine = N(4)-methylcytidine(1402) in 16S rRNA + S-adenosyl-L-homocysteine + H(+). Its function is as follows. Specifically methylates the N4 position of cytidine in position 1402 (C1402) of 16S rRNA. This Burkholderia ambifaria (strain MC40-6) protein is Ribosomal RNA small subunit methyltransferase H.